The sequence spans 189 residues: Glycerol-3-phosphate acyltransferase (189 aa).

Transmembrane regions (helical) follow at residues 1 to 21, 50 to 70, 72 to 92, 111 to 131, and 151 to 171; these read MVWL…AVLL, KLAI…VLVA, WLGL…IGHL, MLLG…LLTF, and LLAW…GLIV.

The protein belongs to the PlsY family. In terms of assembly, probably interacts with PlsX.

The protein resides in the cell inner membrane. The enzyme catalyses an acyl phosphate + sn-glycerol 3-phosphate = a 1-acyl-sn-glycero-3-phosphate + phosphate. The protein operates within lipid metabolism; phospholipid metabolism. Catalyzes the transfer of an acyl group from acyl-phosphate (acyl-PO(4)) to glycerol-3-phosphate (G3P) to form lysophosphatidic acid (LPA). This enzyme utilizes acyl-phosphate as fatty acyl donor, but not acyl-CoA or acyl-ACP. The chain is Glycerol-3-phosphate acyltransferase from Pseudomonas aeruginosa (strain LESB58).